The primary structure comprises 282 residues: ATP phosphoribosyltransferase (282 aa).

This sequence belongs to the ATP phosphoribosyltransferase family. Long subfamily. Mg(2+) is required as a cofactor.

It is found in the cytoplasm. The enzyme catalyses 1-(5-phospho-beta-D-ribosyl)-ATP + diphosphate = 5-phospho-alpha-D-ribose 1-diphosphate + ATP. It participates in amino-acid biosynthesis; L-histidine biosynthesis; L-histidine from 5-phospho-alpha-D-ribose 1-diphosphate: step 1/9. Its activity is regulated as follows. Feedback inhibited by histidine. In terms of biological role, catalyzes the condensation of ATP and 5-phosphoribose 1-diphosphate to form N'-(5'-phosphoribosyl)-ATP (PR-ATP). Has a crucial role in the pathway because the rate of histidine biosynthesis seems to be controlled primarily by regulation of HisG enzymatic activity. This Pyrobaculum aerophilum (strain ATCC 51768 / DSM 7523 / JCM 9630 / CIP 104966 / NBRC 100827 / IM2) protein is ATP phosphoribosyltransferase.